Here is an 88-residue protein sequence, read N- to C-terminus: UPF0297 protein BT9727_4120 (88 aa).

The protein belongs to the UPF0297 family.

This chain is UPF0297 protein BT9727_4120, found in Bacillus thuringiensis subsp. konkukian (strain 97-27).